We begin with the raw amino-acid sequence, 170 residues long: Co-chaperone protein HscB homolog (170 aa).

The J domain maps to 5–79; that stretch reads DHFSLFGLPA…RARYLCEQAG (75 aa).

It belongs to the HscB family. In terms of assembly, interacts with HscA and stimulates its ATPase activity.

Functionally, co-chaperone involved in the maturation of iron-sulfur cluster-containing proteins. Seems to help targeting proteins to be folded toward HscA. In Bordetella parapertussis (strain 12822 / ATCC BAA-587 / NCTC 13253), this protein is Co-chaperone protein HscB homolog.